The following is a 436-amino-acid chain: Na(+)/H(+) antiporter NhaA (436 aa).

Helical transmembrane passes span 31–51 (VGGALLLAATIAALIWANSPG), 74–94 (LSLGAWASDGLLAIFFFIAGL), 112–132 (IVPIAAAIGGVAVPAIIYTLI), 143–163 (GWAIPTATDIAFALAVLAVIS), 173–193 (FLLTLAVVDDLIAISIIAVFY), 196–216 (NLQPQYLALALIPLGLFTWAV), 222–242 (SWYLLLPLAIITWVLVHESGV), 285–305 (VAVPIFAFFSAGVAIGGWAGF), 315–335 (IGIIAALILGKAIGIFGATFL), 350–370 (WIDVLGLAILAGIGFTVSLLI), and 384–404 (HAKVAILTASLVAALLATVIL).

Belongs to the NhaA Na(+)/H(+) (TC 2.A.33) antiporter family.

Its subcellular location is the cell membrane. It catalyses the reaction Na(+)(in) + 2 H(+)(out) = Na(+)(out) + 2 H(+)(in). Functionally, na(+)/H(+) antiporter that extrudes sodium in exchange for external protons. The protein is Na(+)/H(+) antiporter NhaA of Renibacterium salmoninarum (strain ATCC 33209 / DSM 20767 / JCM 11484 / NBRC 15589 / NCIMB 2235).